A 618-amino-acid polypeptide reads, in one-letter code: Dihydroxy-acid dehydratase (618 aa).

Position 81 (Asp-81) interacts with Mg(2+). Cys-122 provides a ligand contact to [2Fe-2S] cluster. Asp-123 and Lys-124 together coordinate Mg(2+). The residue at position 124 (Lys-124) is an N6-carboxylysine. Residue Cys-195 participates in [2Fe-2S] cluster binding. Glu-490 is a binding site for Mg(2+). Ser-516 serves as the catalytic Proton acceptor.

This sequence belongs to the IlvD/Edd family. As to quaternary structure, homodimer. [2Fe-2S] cluster serves as cofactor. It depends on Mg(2+) as a cofactor.

It catalyses the reaction (2R)-2,3-dihydroxy-3-methylbutanoate = 3-methyl-2-oxobutanoate + H2O. The catalysed reaction is (2R,3R)-2,3-dihydroxy-3-methylpentanoate = (S)-3-methyl-2-oxopentanoate + H2O. It functions in the pathway amino-acid biosynthesis; L-isoleucine biosynthesis; L-isoleucine from 2-oxobutanoate: step 3/4. It participates in amino-acid biosynthesis; L-valine biosynthesis; L-valine from pyruvate: step 3/4. Its function is as follows. Functions in the biosynthesis of branched-chain amino acids. Catalyzes the dehydration of (2R,3R)-2,3-dihydroxy-3-methylpentanoate (2,3-dihydroxy-3-methylvalerate) into 2-oxo-3-methylpentanoate (2-oxo-3-methylvalerate) and of (2R)-2,3-dihydroxy-3-methylbutanoate (2,3-dihydroxyisovalerate) into 2-oxo-3-methylbutanoate (2-oxoisovalerate), the penultimate precursor to L-isoleucine and L-valine, respectively. This Gluconobacter oxydans (strain 621H) (Gluconobacter suboxydans) protein is Dihydroxy-acid dehydratase.